The primary structure comprises 201 residues: Ras-related protein Rab-9A (201 aa).

The residue at position 2 (Ala2) is an N-acetylalanine. Residues Gly17, Val18, Gly19, Lys20, Ser21, Ser22, Ser34, His38, and Thr39 each contribute to the GTP site. Ser21 is a binding site for Mg(2+). A Switch 1 motif is present at residues 31–42 (KFDSQLFHTIGV). Phosphoserine is present on Ser34. Residues Thr39 and Asp62 each contribute to the Mg(2+) site. Residues 64–78 (AGQERFRSLRTPFYR) carry the Switch 2 motif. GTP contacts are provided by Gly65, Asn124, Lys125, Asp127, and Lys156. Ser179 carries the phosphoserine modification. Thr187 carries the phosphothreonine modification. S-geranylgeranyl cysteine attachment occurs at residues Cys200 and Cys201.

The protein belongs to the small GTPase superfamily. Rab family. In terms of assembly, interacts (preferentially in its GTP-bound form) with GCC2 (via its GRIP domain). Interacts (GTP-bound form) with SGSM1; the GDP-bound form has much lower affinity for SGSM1. Interacts with SGSM2. The GTP-bound form but not the GDP-bound form interacts with HPS4 and the BLOC-3 complex (heterodimer of HPS1 and HPS4) but does not interact with HPS1 alone. Interacts (GTP-bound form) with NDE1; two RAB9A-GTP molecules lie on the opposite sides of the NDE1 homodimer; the interaction leads to RAB9A-dynein motor tethering. Interacts (GTP-bound form) with NDEL1. It depends on Mg(2+) as a cofactor.

The protein resides in the cell membrane. Its subcellular location is the endoplasmic reticulum membrane. It is found in the golgi apparatus membrane. The protein localises to the late endosome. It localises to the cytoplasmic vesicle. The protein resides in the phagosome membrane. Its subcellular location is the phagosome. It is found in the cytoplasmic vesicle membrane. The protein localises to the melanosome. The catalysed reaction is GTP + H2O = GDP + phosphate + H(+). With respect to regulation, regulated by guanine nucleotide exchange factors (GEFs) which promote the exchange of bound GDP for free GTP. Regulated by GTPase activating proteins (GAPs) which increase the GTP hydrolysis activity. Inhibited by GDP dissociation inhibitors (GDIs). The small GTPases Rab are key regulators of intracellular membrane trafficking, from the formation of transport vesicles to their fusion with membranes. Rabs cycle between an inactive GDP-bound form and an active GTP-bound form that is able to recruit to membranes different sets of downstream effectors directly responsible for vesicle formation, movement, tethering and fusion. RAB9A is involved in the transport of proteins between the endosomes and the trans-Golgi network (TGN). Specifically uses NDE1/NDEL1 as an effector to interact with the dynein motor complex in order to control retrograde trafficking of RAB9-associated late endosomes to the TGN. Involved in the recruitment of SGSM2 to melanosomes and is required for the proper trafficking of melanogenic enzymes TYR, TYRP1 and DCT/TYRP2 to melanosomes in melanocytes. The polypeptide is Ras-related protein Rab-9A (Rattus norvegicus (Rat)).